The chain runs to 314 residues: 4-hydroxy-3-methylbut-2-enyl diphosphate reductase (314 aa).

Cys-12 is a [4Fe-4S] cluster binding site. Residues His-41 and His-74 each contribute to the (2E)-4-hydroxy-3-methylbut-2-enyl diphosphate site. The dimethylallyl diphosphate site is built by His-41 and His-74. The isopentenyl diphosphate site is built by His-41 and His-74. Cys-96 is a binding site for [4Fe-4S] cluster. His-124 serves as a coordination point for (2E)-4-hydroxy-3-methylbut-2-enyl diphosphate. Dimethylallyl diphosphate is bound at residue His-124. His-124 serves as a coordination point for isopentenyl diphosphate. The active-site Proton donor is Glu-126. Thr-168 lines the (2E)-4-hydroxy-3-methylbut-2-enyl diphosphate pocket. Cys-198 is a binding site for [4Fe-4S] cluster. (2E)-4-hydroxy-3-methylbut-2-enyl diphosphate contacts are provided by Ser-226, Ser-227, Asn-228, and Ser-270. Residues Ser-226, Ser-227, Asn-228, and Ser-270 each coordinate dimethylallyl diphosphate. Positions 226, 227, 228, and 270 each coordinate isopentenyl diphosphate.

The protein belongs to the IspH family. It depends on [4Fe-4S] cluster as a cofactor.

The enzyme catalyses isopentenyl diphosphate + 2 oxidized [2Fe-2S]-[ferredoxin] + H2O = (2E)-4-hydroxy-3-methylbut-2-enyl diphosphate + 2 reduced [2Fe-2S]-[ferredoxin] + 2 H(+). The catalysed reaction is dimethylallyl diphosphate + 2 oxidized [2Fe-2S]-[ferredoxin] + H2O = (2E)-4-hydroxy-3-methylbut-2-enyl diphosphate + 2 reduced [2Fe-2S]-[ferredoxin] + 2 H(+). It participates in isoprenoid biosynthesis; dimethylallyl diphosphate biosynthesis; dimethylallyl diphosphate from (2E)-4-hydroxy-3-methylbutenyl diphosphate: step 1/1. The protein operates within isoprenoid biosynthesis; isopentenyl diphosphate biosynthesis via DXP pathway; isopentenyl diphosphate from 1-deoxy-D-xylulose 5-phosphate: step 6/6. Its function is as follows. Catalyzes the conversion of 1-hydroxy-2-methyl-2-(E)-butenyl 4-diphosphate (HMBPP) into a mixture of isopentenyl diphosphate (IPP) and dimethylallyl diphosphate (DMAPP). Acts in the terminal step of the DOXP/MEP pathway for isoprenoid precursor biosynthesis. In Pseudomonas aeruginosa (strain ATCC 15692 / DSM 22644 / CIP 104116 / JCM 14847 / LMG 12228 / 1C / PRS 101 / PAO1), this protein is 4-hydroxy-3-methylbut-2-enyl diphosphate reductase.